The chain runs to 112 residues: Integration host factor subunit alpha (112 aa).

Belongs to the bacterial histone-like protein family. As to quaternary structure, heterodimer of an alpha and a beta chain.

In terms of biological role, this protein is one of the two subunits of integration host factor, a specific DNA-binding protein that functions in genetic recombination as well as in transcriptional and translational control. The protein is Integration host factor subunit alpha of Rhizobium rhizogenes (strain K84 / ATCC BAA-868) (Agrobacterium radiobacter).